A 387-amino-acid chain; its full sequence is Alanine racemase (387 aa).

Lys48 functions as the Proton acceptor; specific for D-alanine in the catalytic mechanism. An N6-(pyridoxal phosphate)lysine modification is found at Lys48. Arg146 contacts substrate. The Proton acceptor; specific for L-alanine role is filled by Tyr267. Residue Met315 coordinates substrate.

It belongs to the alanine racemase family. Pyridoxal 5'-phosphate serves as cofactor.

It carries out the reaction L-alanine = D-alanine. Its pathway is amino-acid biosynthesis; D-alanine biosynthesis; D-alanine from L-alanine: step 1/1. Functionally, catalyzes the interconversion of L-alanine and D-alanine. May also act on other amino acids. This Methylacidiphilum infernorum (isolate V4) (Methylokorus infernorum (strain V4)) protein is Alanine racemase (alr).